The following is a 663-amino-acid chain: Probable potassium transport system protein Kup (663 aa).

The tract at residues 1 to 23 is disordered; that stretch reads MSDNPSSRAGPEVVPTPPPSPAA. 12 consecutive transmembrane segments (helical) span residues 81 to 101, 137 to 157, 173 to 193, 201 to 221, 224 to 244, 248 to 268, 283 to 303, 315 to 335, 373 to 393, 399 to 419, 433 to 453, and 455 to 475; these read PANV…VVTF, LLII…VITP, PALE…LFFI, VGAV…ILGV, ILFD…AFFA, WHGF…EALY, WLLV…AILL, LLVP…AAIV, IYVP…VLGF, LAAA…LLFH, AWPL…ANIV, and VEEG…LLST.

The protein belongs to the HAK/KUP transporter (TC 2.A.72) family.

The protein resides in the cell inner membrane. The enzyme catalyses K(+)(in) + H(+)(in) = K(+)(out) + H(+)(out). Transport of potassium into the cell. Likely operates as a K(+):H(+) symporter. The sequence is that of Probable potassium transport system protein Kup from Anaeromyxobacter sp. (strain Fw109-5).